The primary structure comprises 421 residues: Peroxisomal succinyl-coenzyme A thioesterase (421 aa).

Ser-232 functions as the Charge relay system in the catalytic mechanism. Lys-313 bears the N6-succinyllysine mark. Residues Asp-326 and His-360 each act as charge relay system in the active site. The short motif at 419–421 is the Microbody targeting signal element; that stretch reads CRL.

This sequence belongs to the C/M/P thioester hydrolase family. In terms of tissue distribution, mainly expressed in liver and kidney. Weakly expressed in other tissues including intestine, adrenal gland and adipose tissues.

It localises to the peroxisome. The catalysed reaction is succinyl-CoA + H2O = succinate + CoA + H(+). It carries out the reaction glutaryl-CoA + H2O = glutarate + CoA + H(+). The protein operates within lipid metabolism; fatty acid metabolism. Functionally, catalyzes the hydrolysis of acyl-CoAs into free fatty acids and coenzyme A (CoASH), regulating their respective intracellular levels. In contrast to its human ortholog, functions essentially as a succinyl-CoA thioesterase with no activity with medium to long chain saturated acyl-CoAs and with a low activity toward glutaryl-CoA. This is Peroxisomal succinyl-coenzyme A thioesterase (Acot4) from Mus musculus (Mouse).